Reading from the N-terminus, the 38-residue chain is uncharacterized protein (38 aa).

The helical transmembrane segment at Phe10–Ile32 threads the bilayer.

The protein localises to the membrane. This is an uncharacterized protein from Saccharomyces cerevisiae (strain ATCC 204508 / S288c) (Baker's yeast).